The primary structure comprises 44 residues: Photosystem I reaction center subunit IX (44 aa).

Residues 7–27 traverse the membrane as a helical segment; sequence YLSTAPVLAISWLIFVAGLLI.

This sequence belongs to the PsaJ family.

It localises to the plastid. It is found in the chloroplast thylakoid membrane. In terms of biological role, may help in the organization of the PsaE and PsaF subunits. In Larix decidua (European larch), this protein is Photosystem I reaction center subunit IX.